The chain runs to 134 residues: Cytochrome b (134 aa).

The next 3 helical transmembrane spans lie at 33–53 (FGSLLGVCLGVQILTGLFLAI), 77–98 (WLLRYLHANGASMFFICLYLHV), and 113–133 (WNIGILLLFAVMATAFMGYVL). The heme b site is built by histidine 83 and histidine 97.

Belongs to the cytochrome b family. In terms of assembly, the cytochrome bc1 complex contains 11 subunits: 3 respiratory subunits (MT-CYB, CYC1 and UQCRFS1), 2 core proteins (UQCRC1 and UQCRC2) and 6 low-molecular weight proteins (UQCRH/QCR6, UQCRB/QCR7, UQCRQ/QCR8, UQCR10/QCR9, UQCR11/QCR10 and a cleavage product of UQCRFS1). This cytochrome bc1 complex then forms a dimer. Heme b serves as cofactor.

It localises to the mitochondrion inner membrane. Its function is as follows. Component of the ubiquinol-cytochrome c reductase complex (complex III or cytochrome b-c1 complex) that is part of the mitochondrial respiratory chain. The b-c1 complex mediates electron transfer from ubiquinol to cytochrome c. Contributes to the generation of a proton gradient across the mitochondrial membrane that is then used for ATP synthesis. The chain is Cytochrome b (MT-CYB) from Platyrrhinus helleri (Heller's broad-nosed bat).